We begin with the raw amino-acid sequence, 122 residues long: Autophagy-related protein 8a (122 aa).

The segment at 1 to 21 is disordered; it reads MAKSSFKISNPLEARMSESSR. G117 carries Phosphatidylethanolamine amidated glycine lipidation. Positions 118–122 are cleaved as a propeptide — removed in mature form; the sequence is SLTVA.

This sequence belongs to the ATG8 family. Interacts with ATG4B. Interacts with NBR1. Post-translationally, the C-terminal 5 residues are removed by ATG4 to expose Gly-117 at the C-terminus. This Gly-117 forms then a thioester bond with the 'Cys-558' of ATG7 (E1-like activating enzyme) before being transferred to the 'Cys-258' of ATG3 (the specific E2 conjugating enzyme), in order to be finally amidated with phosphatidylethanolamine. This lipid modification anchors ATG8 to autophagosomes. As to expression, constitutively expressed.

It is found in the cytoplasmic vesicle. Its subcellular location is the autophagosome membrane. The protein localises to the vacuole membrane. The protein resides in the cytoplasm. It localises to the cytoskeleton. In terms of biological role, ubiquitin-like modifier involved in autophagosomes formation. May mediate the delivery of the autophagosomes to the vacuole via the microtubule cytoskeleton. This is Autophagy-related protein 8a (ATG8A) from Arabidopsis thaliana (Mouse-ear cress).